The following is a 36-amino-acid chain: Egg-laying-like hormone (36 aa).

Lys36 carries the lysine amide modification.

In terms of tissue distribution, supra, subesophageal ganglia and segmental ganglia of the ventral nerve cord and brain.

In terms of biological role, may be involved in leech reproduction. In Theromyzon tessulatum (Duck leech), this protein is Egg-laying-like hormone.